A 115-amino-acid chain; its full sequence is Holo-[acyl-carrier-protein] synthase (115 aa).

Mg(2+) is bound by residues D8 and E56.

The protein belongs to the P-Pant transferase superfamily. AcpS family. Mg(2+) is required as a cofactor.

It is found in the cytoplasm. The catalysed reaction is apo-[ACP] + CoA = holo-[ACP] + adenosine 3',5'-bisphosphate + H(+). In terms of biological role, transfers the 4'-phosphopantetheine moiety from coenzyme A to a Ser of acyl-carrier-protein. This is Holo-[acyl-carrier-protein] synthase from Ureaplasma parvum serovar 3 (strain ATCC 27815 / 27 / NCTC 11736).